A 208-amino-acid chain; its full sequence is Putative 3-methyladenine DNA glycosylase (208 aa).

It belongs to the DNA glycosylase MPG family.

This is Putative 3-methyladenine DNA glycosylase from Nitrobacter winogradskyi (strain ATCC 25391 / DSM 10237 / CIP 104748 / NCIMB 11846 / Nb-255).